Here is a 106-residue protein sequence, read N- to C-terminus: Small ribosomal subunit protein uS10 (106 aa).

This sequence belongs to the universal ribosomal protein uS10 family. Part of the 30S ribosomal subunit.

Functionally, involved in the binding of tRNA to the ribosomes. The sequence is that of Small ribosomal subunit protein uS10 from Pyrobaculum calidifontis (strain DSM 21063 / JCM 11548 / VA1).